The following is a 303-amino-acid chain: Acetaldehyde dehydrogenase (303 aa).

Residue 13–16 (SGNI) coordinates NAD(+). The active-site Acyl-thioester intermediate is the C128. Residues 159–167 (SAGPGTRQN) and N278 each bind NAD(+).

This sequence belongs to the acetaldehyde dehydrogenase family.

The enzyme catalyses acetaldehyde + NAD(+) + CoA = acetyl-CoA + NADH + H(+). The sequence is that of Acetaldehyde dehydrogenase from Chloroflexus aggregans (strain MD-66 / DSM 9485).